Here is a 419-residue protein sequence, read N- to C-terminus: MNVHRGSDSDRLLRQEASCLVDDTLAVAQEKEANSLASSGPHNLTYPLGPRNEDLSLDYASQPANLQFPHIMPLAEDIKGSCFQSGNKRNHEPFIAPERFGNSSVGFGSNSHSQAPEKVTLLVDGTRFVVNPQIFTAHPDTMLGRMFGPGREYNFTRPNEKGEYEIAEGISATVFRTVLDYYKTGIINCPDGISIPDLRDTCDYLCINFDFNTIRCQDLSALLHELSNDGAHKQFDHYLEELILPIMVGCAKKGERECHIVVLTDEDSVDWDEDHPPPMGEEYSQILYSSKLYRFFKYIENRDVAKTVLKERGLKNIRIGIEGYPTCKEKIKRRPGGRSEVIYNYVQRPFIQMSWEKEEGKSRHVDFQCVRSKSLTNLVAAGDDVLEDQEILMHHPPQVDELDRLNAPLSQMASNDFQD.

The region spanning 117–191 (EKVTLLVDGT…YKTGIINCPD (75 aa)) is the BTB domain.

Interacts with AKT1; AKT2 and AKT3. Associates with PP2CA. Part of a complex containing MARK4.

Its subcellular location is the cytoplasm. Promotes the phosphorylation of AKT family members. The sequence is that of BTB/POZ domain-containing protein KCTD20 (KCTD20) from Homo sapiens (Human).